A 370-amino-acid polypeptide reads, in one-letter code: 3-hydroxy-3-methylglutaryl-CoA lyase, cytoplasmic (370 aa).

Gly-2 carries N-myristoyl glycine lipidation. Residues 78–345 (VKIVEVGPRD…NTGVNLYKVM (268 aa)) form the Pyruvate carboxyltransferase domain. Arg-86 is a substrate binding site. The a divalent metal cation site is built by Asp-87, His-278, and His-280. The active site involves Cys-311. Residue Asn-320 participates in a divalent metal cation binding.

The protein belongs to the HMG-CoA lyase family. A divalent metal cation is required as a cofactor.

It localises to the cytoplasm. The protein resides in the cytosol. Its subcellular location is the endoplasmic reticulum membrane. The catalysed reaction is (3S)-3-hydroxy-3-methylglutaryl-CoA = acetoacetate + acetyl-CoA. Its pathway is metabolic intermediate metabolism; (S)-3-hydroxy-3-methylglutaryl-CoA degradation; acetoacetate from (S)-3-hydroxy-3-methylglutaryl-CoA: step 1/1. In terms of biological role, non-mitochondrial 3-hydroxy-3-methylglutaryl-CoA lyase that catalyzes a cation-dependent cleavage of (S)-3-hydroxy-3-methylglutaryl-CoA into acetyl-CoA and acetoacetate, a key step in ketogenesis, the products of which support energy production in nonhepatic animal tissues. The protein is 3-hydroxy-3-methylglutaryl-CoA lyase, cytoplasmic (HMGCLL1) of Homo sapiens (Human).